The primary structure comprises 209 residues: 2-phospho-L-lactate guanylyltransferase (209 aa).

It belongs to the CofC family. Homodimer.

It carries out the reaction (2S)-2-phospholactate + GTP + H(+) = (2S)-lactyl-2-diphospho-5'-guanosine + diphosphate. Its pathway is cofactor biosynthesis; coenzyme F420 biosynthesis. Guanylyltransferase that catalyzes the activation of (2S)-2-phospholactate (2-PL) as (2S)-lactyl-2-diphospho-5'-guanosine, via the condensation of 2-PL with GTP. It is involved in the biosynthesis of coenzyme F420, a hydride carrier cofactor. The chain is 2-phospho-L-lactate guanylyltransferase from Methanosphaerula palustris (strain ATCC BAA-1556 / DSM 19958 / E1-9c).